The primary structure comprises 695 residues: MALFLVALLAFLSLGSGCHHRLCHCSNGVFLCQDSKVTEMPSDLPRDAVELRFVLTKLRVIPEGAFSGFGDLEKIEISQNDVLEVIEANVFSNLPKLHEIRIEKANNLLYIDPDAFQNLPNLRYLLISNTGIKHLPAVHKIQSLQKVLLDIQDNINIHTVERNSFMGLSFESMIVWLSKNGIQEIHNCAFNGTQLDELNLSDNSNLEELPNDVFQGASGPVILDISRTRIRSLPSYGLENLKKLRAKSTYHLKKLPSLEKFVTLVEASLTYPSHCCAFANWRRQTSDLHPICNKSILRQEVDDMTQARGQRISLAEDDEPSYAKGFDMMYSEFDYDLCSEVVDVTCSPEPDAFNPCEDIMGYDILRVLIWFISILAITGNILVLVILITSQYKLTVPRFLMCNLAFADLCIGIYLLLIASVDVHTKSQYHNYAIDWQTGAGCDAAGFFTVFASELSVYTLTAITLERWHTITHAMQLECKVHVRHAASIMLVGWVFAFAVALFPIFGISSYMKVSICLPMDIDSPLSQLYVMSLLVLNVLAFVVICGCYTHIYLTVRNPNITSSSSDTKIAKRMAMLIFTDFLCMAPISFFAISASLKVPLITVSKSKILLVLFYPINSCANPFLYAIFTRNFRRDFFILLSKFGCYEVQAQTYRSETSFTAHNFHPRNGHCPPAPRVTNGSNYTLIPLRHLAKN.

The N-terminal stretch at 1–17 is a signal peptide; it reads MALFLVALLAFLSLGSG. Cystine bridges form between Cys18–Cys25 and Cys23–Cys32. In terms of domain architecture, LRRNT spans 18–46; sequence CHHRLCHCSNGVFLCQDSKVTEMPSDLPR. At 18-366 the chain is on the extracellular side; it reads CHHRLCHCSN…EDIMGYDILR (349 aa). LRR repeat units lie at residues 48-70, 71-93, 96-118, 121-142, 143-167, 171-192, 194-216, 219-239, and 240-262; these read AVELRFVLTKLRVIPEGAFSGFG, DLEKIEISQNDVLEVIEANVFSN, KLHEIRIEKANNLLYIDPDAFQN, NLRYLLISNTGIKHLPAVHKIQ, SLQKVLLDIQDNINIHTVERNSFMG, ESMIVWLSKNGIQEIHNCAFNG, QLDELNLSDNSNLEELPNDVFQG, GPVILDISRTRIRSLPSYGLE, and NLKKLRAKSTYHLKKLPSLEKFV. N-linked (GlcNAc...) asparagine glycans are attached at residues Asn191 and Asn199. Disulfide bonds link Cys275–Cys346, Cys276–Cys292, Cys276–Cys356, and Cys292–Cys338. N-linked (GlcNAc...) asparagine glycosylation occurs at Asn293. Tyr335 is subject to Sulfotyrosine. The chain crosses the membrane as a helical span at residues 367–387; it reads VLIWFISILAITGNILVLVIL. At 388 to 398 the chain is on the cytoplasmic side; that stretch reads ITSQYKLTVPR. Residues 399–421 traverse the membrane as a helical segment; sequence FLMCNLAFADLCIGIYLLLIASV. The Extracellular segment spans residues 422-443; it reads DVHTKSQYHNYAIDWQTGAGCD. Cys442 and Cys517 form a disulfide bridge. Residues 444–465 form a helical membrane-spanning segment; that stretch reads AAGFFTVFASELSVYTLTAITL. Topologically, residues 466–485 are cytoplasmic; that stretch reads ERWHTITHAMQLECKVHVRH. The chain crosses the membrane as a helical span at residues 486 to 508; that stretch reads AASIMLVGWVFAFAVALFPIFGI. Residues 509–528 are Extracellular-facing; the sequence is SSYMKVSICLPMDIDSPLSQ. Residues 529-550 traverse the membrane as a helical segment; the sequence is LYVMSLLVLNVLAFVVICGCYT. At 551-573 the chain is on the cytoplasmic side; it reads HIYLTVRNPNITSSSSDTKIAKR. A helical transmembrane segment spans residues 574–597; it reads MAMLIFTDFLCMAPISFFAISASL. The Extracellular portion of the chain corresponds to 598-608; sequence KVPLITVSKSK. A helical membrane pass occupies residues 609 to 630; the sequence is ILLVLFYPINSCANPFLYAIFT. Topologically, residues 631–695 are cytoplasmic; it reads RNFRRDFFIL…LIPLRHLAKN (65 aa).

It belongs to the G-protein coupled receptor 1 family. FSH/LSH/TSH subfamily. Homotrimer. Functions as a homotrimer binding the FSH hormone heterodimer composed of CGA and FSHB. Interacts with ARRB2. Interacts with APPL2; interaction is independent of follicle stimulating hormone stimulation. Post-translationally, N-glycosylated; indirectly required for FSH-binding, possibly via a conformational change that allows high affinity binding of hormone. Sulfated. As to expression, isoform FSH-R3 is expressed in ovary and testis, but not in kidney (at protein level).

It localises to the cell membrane. Its function is as follows. G protein-coupled receptor for follitropin, the follicle-stimulating hormone. The activity of isoform FSH-R1 is mediated by G proteins which activate adenylate cyclase. Isoform FSH-R2 and isoform FSH-R3 also bind FSH, but this does not result in activation of adenylate cyclase. Isoform FSH-R3 may be involved in calcium signaling. Through cAMP production activates the downstream PI3K-AKT and ERK1/ERK2 signaling pathways. The protein is Follicle-stimulating hormone receptor (FSHR) of Ovis aries (Sheep).